Here is a 227-residue protein sequence, read N- to C-terminus: Probable septum site-determining protein MinC (227 aa).

It belongs to the MinC family. In terms of assembly, interacts with MinD and FtsZ.

Functionally, cell division inhibitor that blocks the formation of polar Z ring septums. Rapidly oscillates between the poles of the cell to destabilize FtsZ filaments that have formed before they mature into polar Z rings. Prevents FtsZ polymerization. In Laribacter hongkongensis (strain HLHK9), this protein is Probable septum site-determining protein MinC.